Consider the following 397-residue polypeptide: Ribosomal RNA large subunit methyltransferase I (397 aa).

The PUA domain maps to 2–80 (AIRIKLKPGR…KEEAIDADFF (79 aa)).

It belongs to the methyltransferase superfamily. RlmI family.

Its subcellular location is the cytoplasm. The catalysed reaction is cytidine(1962) in 23S rRNA + S-adenosyl-L-methionine = 5-methylcytidine(1962) in 23S rRNA + S-adenosyl-L-homocysteine + H(+). Its function is as follows. Specifically methylates the cytosine at position 1962 (m5C1962) of 23S rRNA. The chain is Ribosomal RNA large subunit methyltransferase I from Shewanella denitrificans (strain OS217 / ATCC BAA-1090 / DSM 15013).